The chain runs to 99 residues: Large ribosomal subunit protein uL23 (99 aa).

The protein belongs to the universal ribosomal protein uL23 family. As to quaternary structure, part of the 50S ribosomal subunit. Contacts protein L29, and trigger factor when it is bound to the ribosome.

In terms of biological role, one of the early assembly proteins it binds 23S rRNA. One of the proteins that surrounds the polypeptide exit tunnel on the outside of the ribosome. Forms the main docking site for trigger factor binding to the ribosome. The polypeptide is Large ribosomal subunit protein uL23 (Azotobacter vinelandii (strain DJ / ATCC BAA-1303)).